A 105-amino-acid chain; its full sequence is Pyrimidine/purine nucleoside phosphorylase (105 aa).

Belongs to the nucleoside phosphorylase PpnP family.

The enzyme catalyses a purine D-ribonucleoside + phosphate = a purine nucleobase + alpha-D-ribose 1-phosphate. It carries out the reaction adenosine + phosphate = alpha-D-ribose 1-phosphate + adenine. It catalyses the reaction cytidine + phosphate = cytosine + alpha-D-ribose 1-phosphate. The catalysed reaction is guanosine + phosphate = alpha-D-ribose 1-phosphate + guanine. The enzyme catalyses inosine + phosphate = alpha-D-ribose 1-phosphate + hypoxanthine. It carries out the reaction thymidine + phosphate = 2-deoxy-alpha-D-ribose 1-phosphate + thymine. It catalyses the reaction uridine + phosphate = alpha-D-ribose 1-phosphate + uracil. The catalysed reaction is xanthosine + phosphate = alpha-D-ribose 1-phosphate + xanthine. Functionally, catalyzes the phosphorolysis of diverse nucleosides, yielding D-ribose 1-phosphate and the respective free bases. Can use uridine, adenosine, guanosine, cytidine, thymidine, inosine and xanthosine as substrates. Also catalyzes the reverse reactions. This chain is Pyrimidine/purine nucleoside phosphorylase, found in Acidovorax ebreus (strain TPSY) (Diaphorobacter sp. (strain TPSY)).